We begin with the raw amino-acid sequence, 307 residues long: NAD kinase (307 aa).

The active-site Proton acceptor is D78. NAD(+)-binding positions include 78–79 (DG), H83, 154–155 (NE), R165, R182, D184, and Q255.

Belongs to the NAD kinase family. A divalent metal cation is required as a cofactor.

It is found in the cytoplasm. The enzyme catalyses NAD(+) + ATP = ADP + NADP(+) + H(+). Functionally, involved in the regulation of the intracellular balance of NAD and NADP, and is a key enzyme in the biosynthesis of NADP. Catalyzes specifically the phosphorylation on 2'-hydroxyl of the adenosine moiety of NAD to yield NADP. The chain is NAD kinase from Halorhodospira halophila (strain DSM 244 / SL1) (Ectothiorhodospira halophila (strain DSM 244 / SL1)).